Reading from the N-terminus, the 422-residue chain is Glucose-1-phosphate adenylyltransferase (422 aa).

Alpha-D-glucose 1-phosphate contacts are provided by residues tyrosine 109, glycine 175, glutamate 190–lysine 191, and serine 208.

This sequence belongs to the bacterial/plant glucose-1-phosphate adenylyltransferase family. As to quaternary structure, homotetramer.

It catalyses the reaction alpha-D-glucose 1-phosphate + ATP + H(+) = ADP-alpha-D-glucose + diphosphate. Its pathway is glycan biosynthesis; glycogen biosynthesis. In terms of biological role, involved in the biosynthesis of ADP-glucose, a building block required for the elongation reactions to produce glycogen. Catalyzes the reaction between ATP and alpha-D-glucose 1-phosphate (G1P) to produce pyrophosphate and ADP-Glc. The sequence is that of Glucose-1-phosphate adenylyltransferase from Shewanella amazonensis (strain ATCC BAA-1098 / SB2B).